The chain runs to 187 residues: MRQAKTDLAEQIFSATDRLMAREGLNQLSMLKLAKEANVAAGTIYLYFKNKDELLEQFAHRVFSMFMATLEKDFDETKPFFEQYRQMWKNIWYFLQENPTILSNLKQYESLPNFKDICKNIKNCRWDLFCHQAQKAGLLAELSEDILFLLSLKTAINLASDAKFIDFDLKPEILESVIERSWRAIQK.

In terms of domain architecture, HTH tetR-type spans 6–66 (TDLAEQIFSA…QFAHRVFSMF (61 aa)). Positions 29-48 (SMLKLAKEANVAAGTIYLYF) form a DNA-binding region, H-T-H motif.

This is an uncharacterized protein from Haemophilus influenzae (strain ATCC 51907 / DSM 11121 / KW20 / Rd).